We begin with the raw amino-acid sequence, 410 residues long: Peptidase T (410 aa).

H79 contributes to the Zn(2+) binding site. D81 is a catalytic residue. A Zn(2+)-binding site is contributed by D142. Residue E176 is the Proton acceptor of the active site. E177, D199, and H381 together coordinate Zn(2+).

This sequence belongs to the peptidase M20B family. Zn(2+) is required as a cofactor.

The protein resides in the cytoplasm. It carries out the reaction Release of the N-terminal residue from a tripeptide.. Its function is as follows. Cleaves the N-terminal amino acid of tripeptides. The chain is Peptidase T from Listeria monocytogenes serotype 4b (strain F2365).